The primary structure comprises 421 residues: Testin (421 aa).

The PET domain occupies 92 to 199; sequence MILTNPVAAK…GDVKLPCEMD (108 aa). The interval 133–164 is disordered; it reads EKQPVAGSEGAQYRKKQLAKQLPAHDQDPSKC. The segment covering 155-164 has biased composition (basic and acidic residues); that stretch reads PAHDQDPSKC. LIM zinc-binding domains follow at residues 234–297, 299–359, and 362–421; these read YSCY…CDSE, PRCA…NHAV, and QGCH…KMMS.

Belongs to the prickle / espinas / testin family. Interacts via LIM domain 1 with ZYX. Interacts (via LIM domain 3) with ENAH and VASP. Interacts with ALKBH4, talin, actin, alpha-actinin, GRIP1 and PXN. Interacts (via LIM domain 2) with ACTL7A (via N-terminus). Heterodimer with ACTL7A; the heterodimer interacts with ENAH to form a heterotrimer.

The protein resides in the cytoplasm. It localises to the cell junction. It is found in the focal adhesion. Functionally, scaffold protein that may play a role in cell adhesion, cell spreading and in the reorganization of the actin cytoskeleton. Plays a role in the regulation of cell proliferation. May act as a tumor suppressor. The polypeptide is Testin (TES) (Microcebus murinus (Gray mouse lemur)).